A 304-amino-acid chain; its full sequence is MNWITNYVRPKINSMLGRREVPENLWIKCPETGEMVFHRDLEENKWVIPQSGFHMKMPAKARLKDLFDGGIYEAFPQPKVAQDPLKFRDSKKYSDRLRDSRTKTELEDTIVAGLGQVQGIKLVAVAHEFNFIGGSLGIAAGEAIVKAFERAIAEKCPLVMFPASGGARMQEGILSLMQLPRTTVAVNMLKEAGLPYIVVLTNPTTGGVTASYAMLGDVHLAEPGAEIGFAGKRVIEQTLREKLPEGFQTSEYLMEHGMVDMVVKRHDIPETLARVLNILMKKPAKAIKRDTATELAPLPVAASA.

In terms of domain architecture, CoA carboxyltransferase N-terminal spans 25-294; it reads LWIKCPETGE…KAIKRDTATE (270 aa).

This sequence belongs to the AccD/PCCB family. In terms of assembly, acetyl-CoA carboxylase is a heterohexamer composed of biotin carboxyl carrier protein (AccB), biotin carboxylase (AccC) and two subunits each of ACCase subunit alpha (AccA) and ACCase subunit beta (AccD).

The protein resides in the cytoplasm. It catalyses the reaction N(6)-carboxybiotinyl-L-lysyl-[protein] + acetyl-CoA = N(6)-biotinyl-L-lysyl-[protein] + malonyl-CoA. It functions in the pathway lipid metabolism; malonyl-CoA biosynthesis; malonyl-CoA from acetyl-CoA: step 1/1. Component of the acetyl coenzyme A carboxylase (ACC) complex. Biotin carboxylase (BC) catalyzes the carboxylation of biotin on its carrier protein (BCCP) and then the CO(2) group is transferred by the transcarboxylase to acetyl-CoA to form malonyl-CoA. The polypeptide is Acetyl-coenzyme A carboxylase carboxyl transferase subunit beta (Sinorhizobium medicae (strain WSM419) (Ensifer medicae)).